Consider the following 144-residue polypeptide: Transcriptional regulator SlyA (144 aa).

Positions 2 to 135 (ESPLGSDLAR…LLHLIRKLEQ (134 aa)) constitute an HTH marR-type domain. The segment at residues 49–72 (QIQLAKAIGIEQPSLVRTLDQLEE) is a DNA-binding region (H-T-H motif).

This sequence belongs to the SlyA family. As to quaternary structure, homodimer.

Its function is as follows. Transcription regulator that can specifically activate or repress expression of target genes. In Klebsiella pneumoniae (strain 342), this protein is Transcriptional regulator SlyA.